Here is a 391-residue protein sequence, read N- to C-terminus: 8-amino-7-oxononanoate synthase (391 aa).

Residue R19 coordinates substrate. Pyridoxal 5'-phosphate is bound at residue 106 to 107; the sequence is GY. Residue H131 coordinates substrate. Pyridoxal 5'-phosphate-binding residues include S178, H206, and T234. K237 carries the post-translational modification N6-(pyridoxal phosphate)lysine. T353 serves as a coordination point for substrate.

This sequence belongs to the class-II pyridoxal-phosphate-dependent aminotransferase family. BioF subfamily. In terms of assembly, homodimer. Requires pyridoxal 5'-phosphate as cofactor.

It catalyses the reaction 6-carboxyhexanoyl-[ACP] + L-alanine + H(+) = (8S)-8-amino-7-oxononanoate + holo-[ACP] + CO2. Its pathway is cofactor biosynthesis; biotin biosynthesis. In terms of biological role, catalyzes the decarboxylative condensation of pimeloyl-[acyl-carrier protein] and L-alanine to produce 8-amino-7-oxononanoate (AON), [acyl-carrier protein], and carbon dioxide. In Pelobacter propionicus (strain DSM 2379 / NBRC 103807 / OttBd1), this protein is 8-amino-7-oxononanoate synthase.